The chain runs to 376 residues: UDP-N-acetylglucosamine--N-acetylmuramyl-(pentapeptide) pyrophosphoryl-undecaprenol N-acetylglucosamine transferase (376 aa).

UDP-N-acetyl-alpha-D-glucosamine contacts are provided by residues Thr-11–Gly-13, Asn-117, Arg-160, Ser-208, and Gln-310.

The protein belongs to the glycosyltransferase 28 family. MurG subfamily.

It is found in the cell inner membrane. It carries out the reaction di-trans,octa-cis-undecaprenyl diphospho-N-acetyl-alpha-D-muramoyl-L-alanyl-D-glutamyl-meso-2,6-diaminopimeloyl-D-alanyl-D-alanine + UDP-N-acetyl-alpha-D-glucosamine = di-trans,octa-cis-undecaprenyl diphospho-[N-acetyl-alpha-D-glucosaminyl-(1-&gt;4)]-N-acetyl-alpha-D-muramoyl-L-alanyl-D-glutamyl-meso-2,6-diaminopimeloyl-D-alanyl-D-alanine + UDP + H(+). Its pathway is cell wall biogenesis; peptidoglycan biosynthesis. In terms of biological role, cell wall formation. Catalyzes the transfer of a GlcNAc subunit on undecaprenyl-pyrophosphoryl-MurNAc-pentapeptide (lipid intermediate I) to form undecaprenyl-pyrophosphoryl-MurNAc-(pentapeptide)GlcNAc (lipid intermediate II). The polypeptide is UDP-N-acetylglucosamine--N-acetylmuramyl-(pentapeptide) pyrophosphoryl-undecaprenol N-acetylglucosamine transferase (Rickettsia peacockii (strain Rustic)).